The following is a 184-amino-acid chain: Chaperone protein YcdY (184 aa).

Belongs to the TorD/DmsD family. In terms of assembly, interacts with YcdX.

Acts as a chaperone that increases YcdX activity, maybe by facilitating the correct insertion of the zinc ions into the catalytic site of YcdX. Involved in the swarming motility process. This chain is Chaperone protein YcdY (ycdY), found in Escherichia coli (strain K12).